The primary structure comprises 143 residues: Large ribosomal subunit protein uL11 (143 aa).

It belongs to the universal ribosomal protein uL11 family. In terms of assembly, part of the ribosomal stalk of the 50S ribosomal subunit. Interacts with L10 and the large rRNA to form the base of the stalk. L10 forms an elongated spine to which L12 dimers bind in a sequential fashion forming a multimeric L10(L12)X complex. One or more lysine residues are methylated.

Functionally, forms part of the ribosomal stalk which helps the ribosome interact with GTP-bound translation factors. In Laribacter hongkongensis (strain HLHK9), this protein is Large ribosomal subunit protein uL11.